We begin with the raw amino-acid sequence, 238 residues long: 7-cyano-7-deazaguanine synthase 1 (238 aa).

ATP is bound at residue 14–24 (FSGGQDSATCL). Zn(2+) contacts are provided by Cys-202, Cys-217, Cys-220, and Cys-223.

This sequence belongs to the QueC family. Zn(2+) serves as cofactor.

The catalysed reaction is 7-carboxy-7-deazaguanine + NH4(+) + ATP = 7-cyano-7-deazaguanine + ADP + phosphate + H2O + H(+). It functions in the pathway purine metabolism; 7-cyano-7-deazaguanine biosynthesis. Catalyzes the ATP-dependent conversion of 7-carboxy-7-deazaguanine (CDG) to 7-cyano-7-deazaguanine (preQ(0)). This chain is 7-cyano-7-deazaguanine synthase 1, found in Rhodopseudomonas palustris (strain HaA2).